Consider the following 489-residue polypeptide: MEAADYEVLSVREQLFHDRVRECIISILLFATLYILCHIFLTRFKKPAEFTTVDDEDATVNKIALELCTFTLAVALGAVLLLPFSIISNEVLLSLPRNYYIQWLNGSLIHGLWNLVFLFSNLSLVFLMPFAYFFTESEGFAGSRKGVLGRVYETVVMLILLTLLVLGMVWVASAIVDNDKASRESLYDFWEYYLPYLYSCISFLGVLLLLVCTPLGLARMFSVTGKLLVKPRLLEDLEEQLNCSAFEEAALTRRICNPTSCWLPLDMELLHRQVLALQAQRVLLEKRRKASAWQRNLGYPLAMLCLLVLTGLSVLIVAVHILELLIDEAAMPRGMQDAALGQASFSKLGSFGAIIQVVLIFYLMVSSVVGFYSSPLFGSLRPRWHDTSMTQIIGNCVCLLVLSSALPVFSRTLGLTRFDLLGDFGRFNWLGNFYIVFLYNAAFAGLTTLCLVKTFTAAVRAELIRAFGLDRLPLPVSGFPRASRKKQHQ.

Residues 1 to 21 lie on the Extracellular side of the membrane; that stretch reads MEAADYEVLSVREQLFHDRVR. Positions 1 to 59 are interaction with LGB; sequence MEAADYEVLSVREQLFHDRVRECIISILLFATLYILCHIFLTRFKKPAEFTTVDDEDAT. The interval 1–76 is LCN1-binding; that stretch reads MEAADYEVLS…LCTFTLAVAL (76 aa). Residues 22 to 42 traverse the membrane as a helical segment; sequence ECIISILLFATLYILCHIFLT. The Cytoplasmic segment spans residues 43 to 66; the sequence is RFKKPAEFTTVDDEDATVNKIALE. A helical transmembrane segment spans residues 67-87; the sequence is LCTFTLAVALGAVLLLPFSII. Residues 88-114 lie on the Extracellular side of the membrane; it reads SNEVLLSLPRNYYIQWLNGSLIHGLWN. Residues 115-135 traverse the membrane as a helical segment; it reads LVFLFSNLSLVFLMPFAYFFT. Residues 136-154 lie on the Cytoplasmic side of the membrane; that stretch reads ESEGFAGSRKGVLGRVYET. Residues 155 to 175 traverse the membrane as a helical segment; sequence VVMLILLTLLVLGMVWVASAI. Over 176–196 the chain is Extracellular; that stretch reads VDNDKASRESLYDFWEYYLPY. Residues 197 to 217 traverse the membrane as a helical segment; that stretch reads LYSCISFLGVLLLLVCTPLGL. Topologically, residues 218 to 305 are cytoplasmic; that stretch reads ARMFSVTGKL…NLGYPLAMLC (88 aa). A helical membrane pass occupies residues 306–326; the sequence is LLVLTGLSVLIVAVHILELLI. Residues 327 to 350 are Extracellular-facing; sequence DEAAMPRGMQDAALGQASFSKLGS. The chain crosses the membrane as a helical span at residues 351–371; that stretch reads FGAIIQVVLIFYLMVSSVVGF. Topologically, residues 372–388 are cytoplasmic; it reads YSSPLFGSLRPRWHDTS. Residues 389 to 409 form a helical membrane-spanning segment; the sequence is MTQIIGNCVCLLVLSSALPVF. The Extracellular segment spans residues 410 to 431; it reads SRTLGLTRFDLLGDFGRFNWLG. Residues 432-452 form a helical membrane-spanning segment; it reads NFYIVFLYNAAFAGLTTLCLV. Residues 453-489 are Cytoplasmic-facing; it reads KTFTAAVRAELIRAFGLDRLPLPVSGFPRASRKKQHQ.

Belongs to the LIMR family. Dimer. Can also form higher oligomers. Interacts with LCN1; this interaction mediates the endocytosis of LCN1. Interacts with UBAC2, FAF2, VCP, AMFR, ZNRF3, CTNNB1, LRP6, GSK3B, FZD6, DVL2 and RNF43. Interacts with GSK3A. Interaction with LGB and SCGB1A1 is controversial. In terms of tissue distribution, highly expressed in the bone marrow, thymus, spleen and lymphocytes.

The protein resides in the cell membrane. Its subcellular location is the endoplasmic reticulum membrane. Plays an essential role in lymphocyte development by negatively regulating the canonical Wnt signaling pathway. In association with UBAC2 and E3 ubiquitin-protein ligase AMFR, promotes the ubiquitin-mediated degradation of CTNNB1 and Wnt receptors FZD6 and LRP6. LMBR1L stabilizes the beta-catenin destruction complex that is required for regulating CTNNB1 levels. Acts as a LCN1 receptor and can mediate its endocytosis. This Mus musculus (Mouse) protein is Protein LMBR1L (Lmbr1l).